The chain runs to 600 residues: ATP-dependent lipid A-core flippase (600 aa).

Helical transmembrane passes span 26–46 (VGIFLLSIIGFVIFASTQPML), 82–102 (LLIVLIAAWQGLGSFLGNYFL), 167–187 (VFLFIYLLMMNWKLTLVMLAI), and 266–286 (PMLQLVIYSAMAVLMFLVLFL). Positions 30–321 (LLSIIGFVIF…LSEVSSTIQK (292 aa)) constitute an ABC transmembrane type-1 domain. One can recognise an ABC transporter domain in the interval 353 to 589 (LEVKNLSFFY…NGYYARLHAM (237 aa)). Residue 387 to 394 (GRSGSGKS) participates in ATP binding.

This sequence belongs to the ABC transporter superfamily. Lipid exporter (TC 3.A.1.106) family. Homodimer.

It localises to the cell inner membrane. The catalysed reaction is ATP + H2O + lipid A-core oligosaccharideSide 1 = ADP + phosphate + lipid A-core oligosaccharideSide 2.. Its function is as follows. Involved in lipopolysaccharide (LPS) biosynthesis. Translocates lipid A-core from the inner to the outer leaflet of the inner membrane. Transmembrane domains (TMD) form a pore in the inner membrane and the ATP-binding domain (NBD) is responsible for energy generation. In Pseudomonas savastanoi pv. phaseolicola (strain 1448A / Race 6) (Pseudomonas syringae pv. phaseolicola (strain 1448A / Race 6)), this protein is ATP-dependent lipid A-core flippase.